Here is a 203-residue protein sequence, read N- to C-terminus: IMP cyclohydrolase (203 aa).

The protein belongs to the archaeal IMP cyclohydrolase family.

It carries out the reaction IMP + H2O = 5-formamido-1-(5-phospho-D-ribosyl)imidazole-4-carboxamide. It functions in the pathway purine metabolism; IMP biosynthesis via de novo pathway; IMP from 5-formamido-1-(5-phospho-D-ribosyl)imidazole-4-carboxamide: step 1/1. Functionally, catalyzes the cyclization of 5-formylamidoimidazole-4-carboxamide ribonucleotide to IMP. In Methanococcus aeolicus (strain ATCC BAA-1280 / DSM 17508 / OCM 812 / Nankai-3), this protein is IMP cyclohydrolase.